The chain runs to 208 residues: N-(5'-phosphoribosyl)anthranilate isomerase (208 aa).

Belongs to the TrpF family.

It catalyses the reaction N-(5-phospho-beta-D-ribosyl)anthranilate = 1-(2-carboxyphenylamino)-1-deoxy-D-ribulose 5-phosphate. Its pathway is amino-acid biosynthesis; L-tryptophan biosynthesis; L-tryptophan from chorismate: step 3/5. The chain is N-(5'-phosphoribosyl)anthranilate isomerase from Nitrosomonas eutropha (strain DSM 101675 / C91 / Nm57).